The following is a 78-amino-acid chain: NAD(P)H-quinone oxidoreductase subunit O (78 aa).

Belongs to the complex I NdhO subunit family. NDH-1 can be composed of about 15 different subunits; different subcomplexes with different compositions have been identified which probably have different functions.

The protein localises to the cellular thylakoid membrane. It catalyses the reaction a plastoquinone + NADH + (n+1) H(+)(in) = a plastoquinol + NAD(+) + n H(+)(out). The catalysed reaction is a plastoquinone + NADPH + (n+1) H(+)(in) = a plastoquinol + NADP(+) + n H(+)(out). Functionally, NDH-1 shuttles electrons from an unknown electron donor, via FMN and iron-sulfur (Fe-S) centers, to quinones in the respiratory and/or the photosynthetic chain. The immediate electron acceptor for the enzyme in this species is believed to be plastoquinone. Couples the redox reaction to proton translocation, and thus conserves the redox energy in a proton gradient. Cyanobacterial NDH-1 also plays a role in inorganic carbon-concentration. This Prochlorococcus marinus (strain MIT 9215) protein is NAD(P)H-quinone oxidoreductase subunit O.